A 1349-amino-acid polypeptide reads, in one-letter code: MSQHFTSIFENLRFVTIKRSTNAQQQQQQQQQQLQQQQQQLQQQKAQTQQQNSRKIKTQATPTLNGNGLLSGNPNGGGGDSSPSHEVDHPGGAQGAQAAGGLPSSSGTPLRHHKRASISTASPPIRERRGTNTSIVVELDGSGSGSGSGGGGVGVGQGAGCPPSGSCTASGKSSRELSPSPKNQQQPRKMSQDYRSRAGSFMHLDDEGRSLLMRKPMRLKNIEGRPEVYDTLHCKGREILSCSKATCTSSIMNIGNAAVEARKSDLILEHAKDFLEQYFTSIKRTSSTAHETRWKQVRQSIETTGHYQLTETELIYGAKLAWRNSSRCIGRIQWSKLQVFDCRYVTTTSGMFEAICNHIKYATNKGNLRSAITIFPQRTDAKHDYRIWNNQLISYAGYKQADGKIIGDPMNVEFTEVCTKLGWKSKGSEWDILPLVVSANGHDPDYFDYPPELILEVPLTHPKFEWFSDLGLRWYALPAVSSMLFDVGGIQFTATTFSGWYMSTEIGSRNLCDTNRRNMLETVALKMQLDTRTPTSLWKDKAVVEMNIAVLHSYQSRNVTIVDHHTASESFMKHFENESKLRNGCPADWIWIVPPLSGSITPVFHQEMALYYLKPSFEYQDPAWRTHVWKKGRGESKGKKPRRKFNFKQIARAVKFTSKLFGRALSKRIKATVLYATETGKSEQYAKQLCELLGHAFNAQIYCMSDYDISSIEHEALLIVVASTFGNGDPPENGELFSQELYAMRVQESSEHGLQDSSIGSSKSFMKASSRQEFMKLPLQQVKRIDRWDSLRGSTSDTFTEETFGPLSNVRFAVFALGSSAYPNFCAFGQYVDNILGELGGERLLRVAYGDEMCGQEQSFRKWAPEVFKLACETFCLDPEESLSDASLALQNDSLTVNTVRLVPSANKGSLDSSLSKYHNKKVHCCKAKAKPHNLTRLSEGAKTTMLLEICAPGLEYEPGDHVGIFPANRTELVDGLLNRLVGVDNPDEVLQLQLLKEKQTSNGIFKCWEPHDKIPPDTLRNLLARFFDLTTPPSRQLLTLLAGFCEDTADKERLELLVNDSSAYEDWRHWRLPHLLDVLEEFPSCRPPAPLLLAQLTPLQPRFYSISSSPRRVSDEIHLTVAIVKYRCEDGQGDERYGVCSNYLSGLRADDELFMFVRSALGFHLPSDRSRPIILIGPGTGIAPFRSFWQEFQVLSDLDPTAKLPKMWLFFGCRNRDVDLYAEEKAELQKDQILDRVFLALSREQAIPKTYVQDLIEQEFDSLYQLIVQERGHIYVCGDVTMAEHVYQTIRKCIAGKEQKSEAEVETFLLTLRDESRYHEDIFGITLRTAEIHTKSRATARIRMASQP.

The segment at 23 to 195 (AQQQQQQQQQ…QPRKMSQDYR (173 aa)) is disordered. Low complexity-rich tracts occupy residues 24-51 (QQQQQQQQQQLQQQQQQLQQQKAQTQQQ) and 64-73 (LNGNGLLSGN). Residues 142-159 (SGSGSGSGGGGVGVGQGA) are compositionally biased toward gly residues. Positions 165-189 (GSCTASGKSSRELSPSPKNQQQPRK) are enriched in polar residues. Serine 250 contacts (6R)-L-erythro-5,6,7,8-tetrahydrobiopterin. A heme b-binding site is contributed by cysteine 328. Positions 391, 500, 501, 505, and 510 each coordinate L-arginine. Residues tryptophan 591 and phenylalanine 604 each coordinate (6R)-L-erythro-5,6,7,8-tetrahydrobiopterin. Tyrosine 619 provides a ligand contact to heme b. The calmodulin-binding stretch occupies residues 641 to 661 (PRRKFNFKQIARAVKFTSKLF). Residues 671-868 (ATVLYATETG…SFRKWAPEVF (198 aa)) form the Flavodoxin-like domain. FMN is bound at residue 814–845 (VFALGSSAYPNFCAFGQYVDNILGELGGERLL). The region spanning 928-1167 (AKAKPHNLTR…VRSALGFHLP (240 aa)) is the FAD-binding FR-type domain. FAD is bound by residues 957 to 968 (YEPGDHVGIFPA) and 1100 to 1110 (LQPRFYSISSS). NADP(+) is bound by residues 1175–1193 (ILIGPGTGIAPFRSFWQEF) and 1273–1287 (GHIYVCGDVTMAEHV).

It belongs to the NOS family. The cofactor is heme b. FAD is required as a cofactor. Requires FMN as cofactor.

It catalyses the reaction 2 L-arginine + 3 NADPH + 4 O2 + H(+) = 2 L-citrulline + 2 nitric oxide + 3 NADP(+) + 4 H2O. Stimulated by calcium/calmodulin. Functionally, catalyzes the conversion of L-arginine to L-citrulline producing nitric oxide (NO) which is a messenger molecule with diverse functions throughout the body. Truncated isoforms (isoform 3-isoform 6) are able to form intracellular complexes with the full-length protein and serve as dominant negative inhibitors of the enzyme activity. This chain is Nitric oxide synthase (Nos), found in Drosophila melanogaster (Fruit fly).